The primary structure comprises 1953 residues: TATA-binding protein-associated factor mot1 (1953 aa).

One copy of the HEAT 1 repeat lies at 36–74 (PDELYNLLGRVVPYLKSKNWDTRVAAAKAIGGIVENVPV). The interval 79 to 141 (RTSPVKKEET…KLEEERLSTR (63 aa)) is disordered. The span at 98–108 (TEEKPFIKTEE) shows a compositional bias: basic and acidic residues. Residues 113 to 130 (SSQSQVVVSSNLTSNSEV) are compositionally biased toward low complexity. Positions 131–141 (SKLEEERLSTR) are enriched in basic and acidic residues. Ser144 carries the phosphoserine modification. The tract at residues 240–278 (DNVGSNSKGSPTTSIPEHKTSINNNKPEDTPTPSENVHL) is disordered. The segment covering 242–276 (VGSNSKGSPTTSIPEHKTSINNNKPEDTPTPSENV) has biased composition (polar residues). HEAT repeat units lie at residues 358 to 396 (VWPF…YAGF), 513 to 551 (SDYL…KLVQ), 554 to 592 (LSSC…LCSF), and 608 to 646 (EFSF…VQTS). Disordered stretches follow at residues 730–762 (SGQP…KDDP) and 1078–1103 (DDND…KSSL). HEAT repeat units follow at residues 1191–1229 (QSEI…SNAA) and 1270–1311 (VRIL…LVPL). The 174-residue stretch at 1370–1543 (AFLNKYELHG…WSLFDFLMPG (174 aa)) folds into the Helicase ATP-binding domain. Residue 1383–1390 (DDMGLGKT) participates in ATP binding. The short motif at 1494–1497 (DEGH) is the DEGH box element. The stretch at 1580 to 1623 (EAIHKQVLPFMLRRLKEDVLADLPPKIIQDYYCDMSDLQRKLLN) is one HEAT 8 repeat. The 153-residue stretch at 1725 to 1877 (GIDSALTNAV…STVVNQQNAG (153 aa)) folds into the Helicase C-terminal domain. Residues 1901–1920 (QNIDKEESEDAAGRGLSGTS) are disordered.

This sequence belongs to the SNF2/RAD54 helicase family. Forms a complex with TBP which binds TATA DNA.

The protein resides in the nucleus. Its function is as follows. Regulates transcription in association with TATA binding protein (TBP). Removes TBP from the TATA box via its ATPase activity. In Schizosaccharomyces pombe (strain 972 / ATCC 24843) (Fission yeast), this protein is TATA-binding protein-associated factor mot1.